The sequence spans 122 residues: Large ribosomal subunit protein uL14 (122 aa).

This sequence belongs to the universal ribosomal protein uL14 family. In terms of assembly, part of the 50S ribosomal subunit. Forms a cluster with proteins L3 and L19. In the 70S ribosome, L14 and L19 interact and together make contacts with the 16S rRNA in bridges B5 and B8.

Functionally, binds to 23S rRNA. Forms part of two intersubunit bridges in the 70S ribosome. This Psychrobacter sp. (strain PRwf-1) protein is Large ribosomal subunit protein uL14.